Consider the following 413-residue polypeptide: MGLYSPESEKSQLNMNYIGKDDSQSIFRRLNQNLKASNNNNDSNKNGLNMSDYSNNSPYGRSYDVRINQNSQNNGNGCFSGSIDSLVDEHIIPSPPLSPKLESKISHNGSPRMASSVLVGSTPKGAVENVLFVKPVWPNGLSRKRYRYATYGFLSQYKIFSNLAQPYSKNIINRYNNLAYNARHKYSKYNDDMTPPPLPSSSSRLPSPLASPNLNRQARYNMRKQALYNNNLGKFESDTEWIPRKRKVYSPQRRTMTTSPHRAKKFSPSASTPHTNIASIEAIHDAPQYIPNVSWKKLPDYSPPLSTLPTDSNKSLKIEWKGSPMDLSTDPLRNELHPAELVLAQTLRLPCDLYLDSKRRLFLEKVYRLKKGLPFRRTDAQKACRIDVNKASRLFQAFEKVGWLQDSNFTKYL.

The span at 35 to 51 (KASNNNNDSNKNGLNMS) shows a compositional bias: low complexity. 3 disordered regions span residues 35 to 55 (KASNNNNDSNKNGLNMSDYSN), 189 to 211 (YNDDMTPPPLPSSSSRLPSPLAS), and 249 to 271 (YSPQRRTMTTSPHRAKKFSPSAS). Thr-194 is subject to Phosphothreonine. Low complexity predominate over residues 200 to 211 (SSSSRLPSPLAS). Residues Ser-207 and Ser-211 each carry the phosphoserine modification. An SWIRM domain is found at 316-413 (LKIEWKGSPM…LQDSNFTKYL (98 aa)).

The polypeptide is SWIRM domain-containing protein FUN19 (FUN19) (Saccharomyces cerevisiae (strain ATCC 204508 / S288c) (Baker's yeast)).